A 182-amino-acid chain; its full sequence is Bifunctional protein PyrR (182 aa).

The PRPP-binding signature appears at 97 to 109; that stretch reads VVLVDDVIFRGRT.

This sequence belongs to the purine/pyrimidine phosphoribosyltransferase family. PyrR subfamily.

The enzyme catalyses UMP + diphosphate = 5-phospho-alpha-D-ribose 1-diphosphate + uracil. Its function is as follows. Regulates the transcription of the pyrimidine nucleotide (pyr) operon in response to exogenous pyrimidines. Also displays a weak uracil phosphoribosyltransferase activity which is not physiologically significant. This is Bifunctional protein PyrR from Synechococcus sp. (strain JA-2-3B'a(2-13)) (Cyanobacteria bacterium Yellowstone B-Prime).